The following is a 1329-amino-acid chain: Putative protein tag-53 (1329 aa).

Residues 65 to 92 enclose the EGF-like 1 domain; sequence SCDKPCYNGVCLNKACVCSKGWYGSQCD. 5 cysteine pairs are disulfide-bonded: cysteine 66–cysteine 75, cysteine 70–cysteine 80, cysteine 82–cysteine 91, cysteine 94–cysteine 120, and cysteine 144–cysteine 166. In terms of domain architecture, CUB spans 94 to 203; it reads CFGRIRISDN…NGFNVSYESN (110 aa). Asparagine 103 carries an N-linked (GlcNAc...) asparagine glycan. 2 N-linked (GlcNAc...) asparagine glycosylation sites follow: asparagine 197 and asparagine 208. 2 EGF-like domains span residues 204 to 232 and 235 to 270; these read RCAYNCSNHGSCLNGKCDCEDGYKGLNCE and VCQLSGKSTESPCHEGQCVDGRCECLSARVHGETCQ. 6 disulfide bridges follow: cysteine 205–cysteine 215, cysteine 209–cysteine 220, cysteine 222–cysteine 231, cysteine 236–cysteine 252, cysteine 247–cysteine 257, and cysteine 259–cysteine 269. Kelch repeat units follow at residues 302-353, 355-408, 416-463, 471-518, 520-575, and 577-619; these read VVWS…KYKN, LYMF…VAGH, EMFV…AVEY, AILV…YLNG, MVVV…VIGQ, and LYAL…KCVF. Asparagine 324, asparagine 395, asparagine 447, asparagine 481, asparagine 529, and asparagine 555 each carry an N-linked (GlcNAc...) asparagine glycan. Asparagine 820 is a glycosylation site (N-linked (GlcNAc...) asparagine). The N-linked (GlcNAc...) asparagine; atypical glycan is linked to asparagine 832. N-linked (GlcNAc...) asparagine glycans are attached at residues asparagine 833 and asparagine 934. Cystine bridges form between cysteine 945–cysteine 953, cysteine 947–cysteine 968, cysteine 971–cysteine 980, cysteine 983–cysteine 997, cysteine 1000–cysteine 1009, cysteine 1002–cysteine 1016, cysteine 1018–cysteine 1028, and cysteine 1031–cysteine 1045. Laminin EGF-like domains are found at residues 945–999 and 1000–1047; these read CQCN…VCSP and CDCH…PCFY. Positions 952 to 998 constitute an EGF-like 4 domain; it reads TCFTSVGSFPPVTIEKCQSCQNHTTGAHCERCAPGFYGDARNGGVCS. A glycan (N-linked (GlcNAc...) asparagine) is linked at asparagine 973. N-linked (GlcNAc...) asparagine glycosylation is found at asparagine 1066, asparagine 1102, and asparagine 1147. A helical transmembrane segment spans residues 1176 to 1196; that stretch reads VLFFVIFAACFIVLLVVAGLL. The Cytoplasmic portion of the chain corresponds to 1197-1329; it reads WMIKVRIEAY…TIRQRPNNND (133 aa).

The protein resides in the membrane. The protein is Putative protein tag-53 (tag-53) of Caenorhabditis elegans.